The primary structure comprises 419 residues: L-rhamnose isomerase (419 aa).

The Mn(2+) site is built by His262, Asp294, and Asp296.

Belongs to the rhamnose isomerase family. As to quaternary structure, homotetramer. Mn(2+) is required as a cofactor.

It is found in the cytoplasm. It catalyses the reaction L-rhamnopyranose = L-rhamnulose. It participates in carbohydrate degradation; L-rhamnose degradation; glycerone phosphate from L-rhamnose: step 1/3. Functionally, catalyzes the interconversion of L-rhamnose and L-rhamnulose. This chain is L-rhamnose isomerase, found in Shigella boydii serotype 4 (strain Sb227).